We begin with the raw amino-acid sequence, 284 residues long: Tropomyosin (284 aa).

Residues 1–273 are a coiled coil; sequence MDAIKKKMLA…KEKYKAISDE (273 aa).

Belongs to the tropomyosin family. Homodimer.

In terms of biological role, tropomyosin, in association with the troponin complex, plays a central role in the calcium dependent regulation of muscle contraction. This is Tropomyosin from Haliotis diversicolor (Abalone).